A 97-amino-acid polypeptide reads, in one-letter code: Co-chaperonin GroES (97 aa).

Belongs to the GroES chaperonin family. In terms of assembly, heptamer of 7 subunits arranged in a ring. Interacts with the chaperonin GroEL.

The protein localises to the cytoplasm. In terms of biological role, together with the chaperonin GroEL, plays an essential role in assisting protein folding. The GroEL-GroES system forms a nano-cage that allows encapsulation of the non-native substrate proteins and provides a physical environment optimized to promote and accelerate protein folding. GroES binds to the apical surface of the GroEL ring, thereby capping the opening of the GroEL channel. In Baumannia cicadellinicola subsp. Homalodisca coagulata, this protein is Co-chaperonin GroES.